Reading from the N-terminus, the 170-residue chain is Peptide deformylase (170 aa).

The Fe cation site is built by Cys91 and His133. Glu134 is an active-site residue. His137 is a binding site for Fe cation.

Belongs to the polypeptide deformylase family. It depends on Fe(2+) as a cofactor.

It carries out the reaction N-terminal N-formyl-L-methionyl-[peptide] + H2O = N-terminal L-methionyl-[peptide] + formate. Removes the formyl group from the N-terminal Met of newly synthesized proteins. Requires at least a dipeptide for an efficient rate of reaction. N-terminal L-methionine is a prerequisite for activity but the enzyme has broad specificity at other positions. The sequence is that of Peptide deformylase from Yersinia pseudotuberculosis serotype O:1b (strain IP 31758).